Here is a 280-residue protein sequence, read N- to C-terminus: F-box only protein 27 (280 aa).

Residues 1 to 26 form a disordered region; the sequence is MGAWASRGRAARVPAPEPESEPEEAL. One can recognise an F-box domain in the interval 25-72; the sequence is ALDLSQLPPELLLVVLSHVPPRTLLGRCRQVCRGWRALVDGQALWLLI. Residues 100-277 form the FBA domain; it reads PCPLGRFCAR…VTNSSVIVRV (178 aa).

Part of a SCF (SKP1-cullin-F-box) protein ligase complex. Interacts with SKP1 and CUL1.

Its function is as follows. Substrate-recognition component of the SCF (SKP1-CUL1-F-box protein)-type E3 ubiquitin ligase complex. Able to recognize and bind complex-type oligosaccharides. In Macaca fascicularis (Crab-eating macaque), this protein is F-box only protein 27 (FBXO27).